The primary structure comprises 502 residues: Putative diacyglycerol O-acyltransferase Rv1760 (502 aa).

His174 acts as the Proton acceptor in catalysis.

The protein belongs to the long-chain O-acyltransferase family.

It catalyses the reaction an acyl-CoA + a 1,2-diacyl-sn-glycerol = a triacyl-sn-glycerol + CoA. The enzyme catalyses di-(9Z)-octadecenoylglycerol + (9Z)-octadecenoyl-CoA = 1,2,3-tri-(9Z-octadecenoyl)-glycerol + CoA. It participates in glycerolipid metabolism; triacylglycerol biosynthesis. Its function is as follows. Catalyzes the terminal and only committed step in triacylglycerol synthesis by using diacylglycerol and fatty acyl CoA as substrates. Required for storage lipid synthesis. Upon expression in E.coli functions weakly as a triacylglycerol synthase, making triacylglycerol (TG) from diolein and long-chain fatty acyl-CoA. Has very weak wax synthase activity, incorporating palmityl alcohol into wax esters in the presence of palmitoyl-CoA. This is Putative diacyglycerol O-acyltransferase Rv1760 from Mycobacterium tuberculosis (strain ATCC 25618 / H37Rv).